The chain runs to 5263 residues: Fibroin heavy chain (5263 aa).

The N-terminal stretch at 1–21 (MRVKTFVILCCALQYVAYTNA) is a signal peptide. The highly repetitive stretch occupies residues 149 to 5206 (AAVGAGAGAG…GSGAGAGGSV (5058 aa)). Cysteines 5260 and 5263 form a disulfide.

Silk fibroin elementary unit consists in a disulfide-linked heavy and light chain and a p25 glycoprotein in molar ratios of 6:6:1. This results in a complex of approximately 2.3 MDa. The interchain disulfide bridge is essential for the intracellular transport and secretion of fibroin. Produced exclusively in the posterior (PSG) section of silk glands, which are essentially modified salivary glands.

In terms of biological role, core component of the silk filament; a strong, insoluble and chemically inert fiber. The chain is Fibroin heavy chain (FIBH) from Bombyx mori (Silk moth).